We begin with the raw amino-acid sequence, 815 residues long: Putative transcription factor phnE (815 aa).

The tract at residues 522 to 577 (PSRRNSDGSAHSSPSSTPSSSSTSSPLPSPASERPPPLDVVTRPSTGTSTPSSPTL) is disordered. Low complexity predominate over residues 523–547 (SRRNSDGSAHSSPSSTPSSSSTSSP). The span at 548–559 (LPSPASERPPPL) shows a compositional bias: pro residues. The segment covering 563–577 (TRPSTGTSTPSSPTL) has biased composition (low complexity).

The protein resides in the nucleus. Putative transcription factor that may be involved in the regulation of the expression of the gene cluster that mediates the biosynthesis of phenalenones such as herqueinone, compounds that have been reported to treat tumors, bacterial infections and/or mycoses, and rheumatic diseases. This chain is Putative transcription factor phnE, found in Penicillium herquei.